A 32-amino-acid polypeptide reads, in one-letter code: Apolipophorin-3 (32 aa).

The tract at residues 1-32 (DAPSTTPPQDXEKKAAEFQKTFTEQXNQLANK) is disordered. The segment covering 20–32 (KTFTEQXNQLANK) has biased composition (polar residues).

This sequence belongs to the insect apolipophorin-3 family. In terms of assembly, equilibrium between a soluble monomer and a bound lipoprotein form. Apolipophorin-3 associates with lipophorin during lipid loading until each particle contains 9 or 14 molecules of apolipophorin-3. As to expression, hemolymph.

The protein localises to the secreted. Functionally, assists in the loading of diacylglycerol, generated from triacylglycerol stores in the fat body through the action of adipokinetic hormone, into lipophorin, the hemolymph lipoprotein. It increases the lipid carrying capacity of lipophorin by covering the expanding hydrophobic surface resulting from diacylglycerol uptake. It thus plays a critical role in the transport of lipids during flight in several species of insects. This chain is Apolipophorin-3, found in Diatraea grandiosella (Southwestern corn borer).